Here is a 120-residue protein sequence, read N- to C-terminus: Large ribosomal subunit protein bL20 (120 aa).

This sequence belongs to the bacterial ribosomal protein bL20 family.

Functionally, binds directly to 23S ribosomal RNA and is necessary for the in vitro assembly process of the 50S ribosomal subunit. It is not involved in the protein synthesizing functions of that subunit. The chain is Large ribosomal subunit protein bL20 from Desulforudis audaxviator (strain MP104C).